Consider the following 84-residue polypeptide: Large ribosomal subunit protein bL31B (84 aa).

It belongs to the bacterial ribosomal protein bL31 family. Type B subfamily. In terms of assembly, part of the 50S ribosomal subunit.

This Phocaeicola vulgatus (strain ATCC 8482 / DSM 1447 / JCM 5826 / CCUG 4940 / NBRC 14291 / NCTC 11154) (Bacteroides vulgatus) protein is Large ribosomal subunit protein bL31B.